The primary structure comprises 316 residues: UDP-N-acetylenolpyruvoylglucosamine reductase (316 aa).

An FAD-binding PCMH-type domain is found at 30–194 (VGGEADYLVF…LSVKFALAPG (165 aa)). R173 is an active-site residue. Residue S223 is the Proton donor of the active site. E293 is an active-site residue.

The protein belongs to the MurB family. FAD serves as cofactor.

The protein resides in the cytoplasm. It carries out the reaction UDP-N-acetyl-alpha-D-muramate + NADP(+) = UDP-N-acetyl-3-O-(1-carboxyvinyl)-alpha-D-glucosamine + NADPH + H(+). The protein operates within cell wall biogenesis; peptidoglycan biosynthesis. Functionally, cell wall formation. The polypeptide is UDP-N-acetylenolpyruvoylglucosamine reductase (Streptococcus pneumoniae serotype 2 (strain D39 / NCTC 7466)).